Consider the following 320-residue polypeptide: Adhesin MafA 1/4 (320 aa).

The first 18 residues, 1-18, serve as a signal peptide directing secretion; it reads MRARLLIPILFSVFILSA. Cysteine 19 is lipidated: N-palmitoyl cysteine. Cysteine 19 is lipidated: S-diacylglycerol cysteine. The disordered stretch occupies residues 287–320; that stretch reads NHTGNSAPSVEADNSHEGYGYSDEAVRQHRQGQP.

The protein belongs to the MafA family.

The protein localises to the cell outer membrane. The sequence is that of Adhesin MafA 1/4 (mafA1) from Neisseria gonorrhoeae (strain ATCC 700825 / FA 1090).